A 272-amino-acid polypeptide reads, in one-letter code: Ribosomal RNA small subunit methyltransferase A (272 aa).

S-adenosyl-L-methionine-binding residues include N18, L20, G45, E66, D91, and N113.

It belongs to the class I-like SAM-binding methyltransferase superfamily. rRNA adenine N(6)-methyltransferase family. RsmA subfamily.

The protein localises to the cytoplasm. The catalysed reaction is adenosine(1518)/adenosine(1519) in 16S rRNA + 4 S-adenosyl-L-methionine = N(6)-dimethyladenosine(1518)/N(6)-dimethyladenosine(1519) in 16S rRNA + 4 S-adenosyl-L-homocysteine + 4 H(+). In terms of biological role, specifically dimethylates two adjacent adenosines (A1518 and A1519) in the loop of a conserved hairpin near the 3'-end of 16S rRNA in the 30S particle. May play a critical role in biogenesis of 30S subunits. The polypeptide is Ribosomal RNA small subunit methyltransferase A (Yersinia pestis bv. Antiqua (strain Antiqua)).